The sequence spans 529 residues: MATQMVNQSTGNSLFCTSTYSNISLDNDMYGLHDLSKADMAAPRLIMLANVALTGELSSGCCDYTPEGERQMAELTTVNDNSFSDSEGDRLEDSPSMDIQSHNFIMEMEPAECSKEGTSENDGTLLSNTLEVEVQKDKRTPSPTDDKYKCVKSKPFRCKPCQYKAESEEEFVHHIKIHSAKIYVDNDSNKKAQGNEADSSISEESDVSKGPIQCDRCGYNTNRFDHYLAHLKHHNKAGENERVYKCTICTYTTVSEYHWKKHLRNHYPRILYTCSQCSYFSDRKNNYIQHIRTHTGERPYQCILCPYSSSQKTHLTRHMRTHSGEKPFKCEQCSYVASNQHEVTRHARQVHNGPKPLTCPHCDYKTADRSNFKKHVELHVNPRQFLCPVCDYAASKKCNLQYHIKSRHSGCTNITMDVSKVKLRTKKGDIGVADVDANKQTENGNIIDKSVEETVKAEKRESCGKAKKSIVNLVDGQVAKKRRLSSTQKKIKTSDARPEKILDKSRKSSCVKRKSDLLENSNDTQTSTV.

A C2H2-type 1 zinc finger spans residues 156–178 (FRCKPCQYKAESEEEFVHHIKIH). A disordered region spans residues 188–210 (SNKKAQGNEADSSISEESDVSKG). C2H2-type zinc fingers lie at residues 212-234 (IQCD…LKHH), 244-266 (YKCT…LRNH), 272-294 (YTCS…IRTH), 300-322 (YQCI…MRTH), 328-351 (FKCE…RQVH), 357-379 (LTCP…VELH), and 385-408 (FLCP…KSRH). The segment at 484–529 (LSSTQKKIKTSDARPEKILDKSRKSSCVKRKSDLLENSNDTQTSTV) is disordered. Over residues 492 to 506 (KTSDARPEKILDKSR) the composition is skewed to basic and acidic residues. A compositionally biased stretch (polar residues) spans 518–529 (LENSNDTQTSTV).

It is found in the nucleus. The protein resides in the cytoplasm. In terms of biological role, transcriptional repressor which binds neuron-restrictive silencer element (NRSE) and represses neuronal gene transcription in non-neuronal cells. Plays a role in the early development of the nervous system and is required for proper patterning of the neuroectoderm during gastrulation. This involves the correct speciation of the neuroepithelial domain and adequate development of the non-neural ectoderm. The sequence is that of RE1-silencing transcription factor B (rest-b) from Xenopus laevis (African clawed frog).